The following is a 447-amino-acid chain: Na(+)-translocating NADH-quinone reductase subunit A (447 aa).

The protein belongs to the NqrA family. In terms of assembly, composed of six subunits; NqrA, NqrB, NqrC, NqrD, NqrE and NqrF.

It catalyses the reaction a ubiquinone + n Na(+)(in) + NADH + H(+) = a ubiquinol + n Na(+)(out) + NAD(+). Its function is as follows. NQR complex catalyzes the reduction of ubiquinone-1 to ubiquinol by two successive reactions, coupled with the transport of Na(+) ions from the cytoplasm to the periplasm. NqrA to NqrE are probably involved in the second step, the conversion of ubisemiquinone to ubiquinol. In Haemophilus influenzae (strain 86-028NP), this protein is Na(+)-translocating NADH-quinone reductase subunit A.